A 558-amino-acid chain; its full sequence is Dihydroxy-acid dehydratase (558 aa).

D78 contacts Mg(2+). Residue C119 participates in [2Fe-2S] cluster binding. D120 and K121 together coordinate Mg(2+). Position 121 is an N6-carboxylysine (K121). C192 lines the [2Fe-2S] cluster pocket. Residue E446 coordinates Mg(2+). S472 (proton acceptor) is an active-site residue.

This sequence belongs to the IlvD/Edd family. In terms of assembly, homodimer. [2Fe-2S] cluster serves as cofactor. Mg(2+) is required as a cofactor.

The catalysed reaction is (2R)-2,3-dihydroxy-3-methylbutanoate = 3-methyl-2-oxobutanoate + H2O. It catalyses the reaction (2R,3R)-2,3-dihydroxy-3-methylpentanoate = (S)-3-methyl-2-oxopentanoate + H2O. The protein operates within amino-acid biosynthesis; L-isoleucine biosynthesis; L-isoleucine from 2-oxobutanoate: step 3/4. It participates in amino-acid biosynthesis; L-valine biosynthesis; L-valine from pyruvate: step 3/4. Its function is as follows. Functions in the biosynthesis of branched-chain amino acids. Catalyzes the dehydration of (2R,3R)-2,3-dihydroxy-3-methylpentanoate (2,3-dihydroxy-3-methylvalerate) into 2-oxo-3-methylpentanoate (2-oxo-3-methylvalerate) and of (2R)-2,3-dihydroxy-3-methylbutanoate (2,3-dihydroxyisovalerate) into 2-oxo-3-methylbutanoate (2-oxoisovalerate), the penultimate precursor to L-isoleucine and L-valine, respectively. The protein is Dihydroxy-acid dehydratase of Campylobacter jejuni subsp. jejuni serotype O:23/36 (strain 81-176).